We begin with the raw amino-acid sequence, 34 residues long: Photosystem II reaction center protein M (34 aa).

The chain crosses the membrane as a helical span at residues 5–25 (ILALIAVALFISIPTAFLVII).

It belongs to the PsbM family. In terms of assembly, PSII is composed of 1 copy each of membrane proteins PsbA, PsbB, PsbC, PsbD, PsbE, PsbF, PsbH, PsbI, PsbJ, PsbK, PsbL, PsbM, PsbT, PsbX, PsbY, PsbZ, Psb30/Ycf12, at least 3 peripheral proteins of the oxygen-evolving complex and a large number of cofactors. It forms dimeric complexes.

The protein resides in the plastid. Its subcellular location is the chloroplast thylakoid membrane. One of the components of the core complex of photosystem II (PSII). PSII is a light-driven water:plastoquinone oxidoreductase that uses light energy to abstract electrons from H(2)O, generating O(2) and a proton gradient subsequently used for ATP formation. It consists of a core antenna complex that captures photons, and an electron transfer chain that converts photonic excitation into a charge separation. This subunit is found at the monomer-monomer interface. The polypeptide is Photosystem II reaction center protein M (Welwitschia mirabilis (Tree tumbo)).